A 402-amino-acid polypeptide reads, in one-letter code: NADH-quinone oxidoreductase subunit D (402 aa).

Belongs to the complex I 49 kDa subunit family. NDH-1 is composed of 14 different subunits. Subunits NuoB, C, D, E, F, and G constitute the peripheral sector of the complex.

The protein resides in the cell inner membrane. It catalyses the reaction a quinone + NADH + 5 H(+)(in) = a quinol + NAD(+) + 4 H(+)(out). In terms of biological role, NDH-1 shuttles electrons from NADH, via FMN and iron-sulfur (Fe-S) centers, to quinones in the respiratory chain. The immediate electron acceptor for the enzyme in this species is believed to be ubiquinone. Couples the redox reaction to proton translocation (for every two electrons transferred, four hydrogen ions are translocated across the cytoplasmic membrane), and thus conserves the redox energy in a proton gradient. The sequence is that of NADH-quinone oxidoreductase subunit D from Xanthobacter autotrophicus (strain ATCC BAA-1158 / Py2).